A 664-amino-acid polypeptide reads, in one-letter code: E3 ubiquitin-protein ligase CHFR (664 aa).

The segment at 1–21 is disordered; it reads MERPEEGKQSPPPQPWGRLLR. The 52-residue stretch at 38–89 folds into the FHA domain; the sequence is WTIGRRRGCDLSFPSNKLVSGDHCRIVVDEKSGQVTLEDTSTSGTVINKLKV. The interval 142–267 is disordered; that stretch reads FHGTKDTSGA…KKMRGDGDLD (126 aa). Low complexity predominate over residues 186-198; it reads PTASASSTEPSPA. A Phosphoserine modification is found at serine 244. Residues 254–264 are compositionally biased toward basic and acidic residues; sequence EPVKKKMRGDG. The RING-type zinc-finger motif lies at 304–343; that stretch reads CIICQDLLHDCVSLQPCMHTFCAACYSGWMERSSLCPTCR. The residue at position 386 (threonine 386) is a Phosphothreonine. 2 disordered regions span residues 388–417 and 439–461; these read DMLQ…VDSE and AQPP…GDAP. The segment covering 400 to 417 has biased composition (acidic residues); sequence DEEGSSEDLLELSDVDSE. The PBZ-type zinc finger occupies 633–655; it reads PDCYWGRNCRTQVKAHHAMKFNH.

The protein belongs to the CHFR family. Interacts with HDAC1 and HDAC2. Interacts with PML (with sumoylated form of PML). Post-translationally, poly-ADP-ribosylated. In addition to binding non covalently poly(ADP-ribose) via its PBZ-type zinc finger, the protein is also covalently poly-ADP-ribosylated by PARP1. In terms of processing, autoubiquitinated; may regulate its cellular level. Phosphorylated by PKB. Phosphorylation may affect its E3 ligase activity. As to expression, ubiquitous.

It localises to the nucleus. The protein localises to the PML body. The catalysed reaction is S-ubiquitinyl-[E2 ubiquitin-conjugating enzyme]-L-cysteine + [acceptor protein]-L-lysine = [E2 ubiquitin-conjugating enzyme]-L-cysteine + N(6)-ubiquitinyl-[acceptor protein]-L-lysine.. It functions in the pathway protein modification; protein ubiquitination. In terms of biological role, E3 ubiquitin-protein ligase that functions in the antephase checkpoint by actively delaying passage into mitosis in response to microtubule poisons. Acts in early prophase before chromosome condensation, when the centrosome move apart from each other along the periphery of the nucleus. Probably involved in signaling the presence of mitotic stress caused by microtubule poisons by mediating the 'Lys-48'-linked ubiquitination of target proteins, leading to their degradation by the proteasome. Promotes the ubiquitination and subsequent degradation of AURKA and PLK1. Probably acts as a tumor suppressor, possibly by mediating the polyubiquitination of HDAC1, leading to its degradation. May also promote the formation of 'Lys-63'-linked polyubiquitin chains and functions with the specific ubiquitin-conjugating UBC13-MMS2 (UBE2N-UBE2V2) heterodimer. Substrates that are polyubiquitinated at 'Lys-63' are usually not targeted for degradation, but are rather involved in signaling cellular stress. The sequence is that of E3 ubiquitin-protein ligase CHFR (CHFR) from Homo sapiens (Human).